A 237-amino-acid chain; its full sequence is UDP-2,3-diacylglucosamine hydrolase (237 aa).

Aspartate 9, histidine 11, aspartate 42, asparagine 80, and histidine 115 together coordinate Mn(2+). A substrate-binding site is contributed by 80–81 (NR). Substrate-binding residues include aspartate 123, serine 161, lysine 165, lysine 168, and histidine 196. Mn(2+) contacts are provided by histidine 196 and histidine 198.

Belongs to the LpxH family. Requires Mn(2+) as cofactor.

It is found in the cell inner membrane. The catalysed reaction is UDP-2-N,3-O-bis[(3R)-3-hydroxytetradecanoyl]-alpha-D-glucosamine + H2O = 2-N,3-O-bis[(3R)-3-hydroxytetradecanoyl]-alpha-D-glucosaminyl 1-phosphate + UMP + 2 H(+). It functions in the pathway glycolipid biosynthesis; lipid IV(A) biosynthesis; lipid IV(A) from (3R)-3-hydroxytetradecanoyl-[acyl-carrier-protein] and UDP-N-acetyl-alpha-D-glucosamine: step 4/6. Functionally, hydrolyzes the pyrophosphate bond of UDP-2,3-diacylglucosamine to yield 2,3-diacylglucosamine 1-phosphate (lipid X) and UMP by catalyzing the attack of water at the alpha-P atom. Involved in the biosynthesis of lipid A, a phosphorylated glycolipid that anchors the lipopolysaccharide to the outer membrane of the cell. The sequence is that of UDP-2,3-diacylglucosamine hydrolase from Haemophilus influenzae (strain PittGG).